A 61-amino-acid chain; its full sequence is Tryptophyllin-1 (61 aa).

An N-terminal signal peptide occupies residues M1–C22. A propeptide spanning residues D23–E53 is cleaved from the precursor. A disordered region spans residues E24–V61. Residues S36–P55 show a composition bias toward basic and acidic residues.

As to expression, expressed by the skin glands.

Its subcellular location is the secreted. Its function is as follows. The synthetic peptide inhibits bradykinin-induced relaxation of rat tail artery smooth muscle, and also has anti-proliferative effects on the human prostate cancer cell lines LNCaP, PC3 and DU145. This chain is Tryptophyllin-1, found in Phyllomedusa sauvagei (Sauvage's leaf frog).